The following is an 807-amino-acid chain: Glycerol-3-phosphate acyltransferase (807 aa).

Positions 308-313 (CHRSHM) match the HXXXXD motif motif.

Belongs to the GPAT/DAPAT family.

The protein resides in the cell inner membrane. The catalysed reaction is sn-glycerol 3-phosphate + an acyl-CoA = a 1-acyl-sn-glycero-3-phosphate + CoA. It participates in phospholipid metabolism; CDP-diacylglycerol biosynthesis; CDP-diacylglycerol from sn-glycerol 3-phosphate: step 1/3. The chain is Glycerol-3-phosphate acyltransferase from Shewanella amazonensis (strain ATCC BAA-1098 / SB2B).